The chain runs to 141 residues: Large ribosomal subunit protein uL16 (141 aa).

A disordered region spans residues 1–23 (MLMPKRTKYRKQMKGRNRGKAHR).

The protein belongs to the universal ribosomal protein uL16 family. Part of the 50S ribosomal subunit.

In terms of biological role, binds 23S rRNA and is also seen to make contacts with the A and possibly P site tRNAs. The sequence is that of Large ribosomal subunit protein uL16 from Helicobacter acinonychis (strain Sheeba).